The primary structure comprises 809 residues: Ribosome biogenesis protein ERB1 (809 aa).

The interval 1–107 is disordered; it reads MSKSSKVGMT…SDTRSITDAI (107 aa). 2 stretches are compositionally biased toward acidic residues: residues 30-70 and 77-97; these read AEVD…EDSD and LGEE…EPQE. The interval 267 to 383 is required for interaction with NOP7; that stretch reads RFVPSKHEAK…LRKVPGYQES (117 aa). The interval 383-419 is required for interaction with YTM1; sequence SVRERFERCLDLYLAPRVRHNKLNIDPESLIPELPSP. WD repeat units lie at residues 435–474 and 483–523; these read GHTD…QVFN and NDED…FDIE. The tract at residues 545–569 is disordered; it reads EEKFKNDEGNEDEDDEDDSATSTAV. Acidic residues predominate over residues 553–563; it reads GNEDEDDEDDS. WD repeat units follow at residues 593–635, 638–676, 679–718, 722–762, and 778–809; these read QCRK…SQSP, KSKG…LVKK, PGVR…TPYK, YHEK…DLMT, and VNSI…LWTT.

It belongs to the WD repeat BOP1/ERB1 family. Component of the NOP7 complex, composed of ERB1, NOP7 and YTM1. The complex is held together by ERB1, which interacts with NOP7 via its N-terminal domain and with YTM1 via a high-affinity interaction between the seven-bladed beta-propeller domains of the 2 proteins. The NOP7 complex associates with the 66S pre-ribosome.

The protein localises to the nucleus. The protein resides in the nucleolus. Its subcellular location is the nucleoplasm. Component of the NOP7 complex, which is required for maturation of the 25S and 5.8S ribosomal RNAs and formation of the 60S ribosome. The polypeptide is Ribosome biogenesis protein ERB1 (Scheffersomyces stipitis (strain ATCC 58785 / CBS 6054 / NBRC 10063 / NRRL Y-11545) (Yeast)).